The sequence spans 67 residues: DNA-directed RNA polymerase subunit omega (67 aa).

Belongs to the RNA polymerase subunit omega family. In terms of assembly, the RNAP catalytic core consists of 2 alpha, 1 beta, 1 beta' and 1 omega subunit. When a sigma factor is associated with the core the holoenzyme is formed, which can initiate transcription.

It catalyses the reaction RNA(n) + a ribonucleoside 5'-triphosphate = RNA(n+1) + diphosphate. Its function is as follows. Promotes RNA polymerase assembly. Latches the N- and C-terminal regions of the beta' subunit thereby facilitating its interaction with the beta and alpha subunits. The sequence is that of DNA-directed RNA polymerase subunit omega from Paracidovorax citrulli (strain AAC00-1) (Acidovorax citrulli).